We begin with the raw amino-acid sequence, 394 residues long: Elongation factor Tu 1 (394 aa).

The 195-residue stretch at 10-204 folds into the tr-type G domain; it reads KPHVNVGTIG…ALDTYIPEPA (195 aa). Residues 19-26 are G1; sequence GHVDHGKT. Position 19 to 26 (19 to 26) interacts with GTP; it reads GHVDHGKT. Thr-26 contacts Mg(2+). Residues 60–64 form a G2 region; sequence GITIN. A G3 region spans residues 81 to 84; it reads DCPG. GTP is bound by residues 81 to 85 and 136 to 139; these read DCPGH and NKCD. The segment at 136–139 is G4; it reads NKCD. Residues 174–176 are G5; the sequence is SAL.

This sequence belongs to the TRAFAC class translation factor GTPase superfamily. Classic translation factor GTPase family. EF-Tu/EF-1A subfamily. Monomer.

The protein localises to the cytoplasm. The catalysed reaction is GTP + H2O = GDP + phosphate + H(+). Its function is as follows. GTP hydrolase that promotes the GTP-dependent binding of aminoacyl-tRNA to the A-site of ribosomes during protein biosynthesis. In Shewanella frigidimarina (strain NCIMB 400), this protein is Elongation factor Tu 1.